The chain runs to 290 residues: Probable protein phosphatase 2C 62 (290 aa).

Positions 38–288 constitute a PPM-type phosphatase domain; the sequence is KHGYHLVKGK…DDISCIVVKF (251 aa). Positions 75, 76, 240, and 279 each coordinate Mn(2+).

It belongs to the PP2C family. Mg(2+) is required as a cofactor. Requires Mn(2+) as cofactor.

It carries out the reaction O-phospho-L-seryl-[protein] + H2O = L-seryl-[protein] + phosphate. The catalysed reaction is O-phospho-L-threonyl-[protein] + H2O = L-threonyl-[protein] + phosphate. This Oryza sativa subsp. japonica (Rice) protein is Probable protein phosphatase 2C 62.